The primary structure comprises 332 residues: Protein EXORDIUM-like 6 (332 aa).

The first 27 residues, 1-27, serve as a signal peptide directing secretion; that stretch reads MAMASASSSSSSISVIIFLLLAPLCLS. Residues N36, N102, and N143 are each glycosylated (N-linked (GlcNAc...) asparagine).

Belongs to the EXORDIUM family.

The protein resides in the secreted. Its subcellular location is the extracellular space. The protein localises to the apoplast. In terms of biological role, may play a role in a brassinosteroid-dependent regulation of growth and development. The polypeptide is Protein EXORDIUM-like 6 (EXL6) (Arabidopsis thaliana (Mouse-ear cress)).